We begin with the raw amino-acid sequence, 259 residues long: Ribonuclease PH (259 aa).

Phosphate-binding positions include Arg-88 and 126-128 (GTR).

Belongs to the RNase PH family. In terms of assembly, homohexameric ring arranged as a trimer of dimers.

The enzyme catalyses tRNA(n+1) + phosphate = tRNA(n) + a ribonucleoside 5'-diphosphate. Functionally, phosphorolytic 3'-5' exoribonuclease that plays an important role in tRNA 3'-end maturation. Removes nucleotide residues following the 3'-CCA terminus of tRNAs; can also add nucleotides to the ends of RNA molecules by using nucleoside diphosphates as substrates, but this may not be physiologically important. Probably plays a role in initiation of 16S rRNA degradation (leading to ribosome degradation) during starvation. In Mycobacterium leprae (strain Br4923), this protein is Ribonuclease PH.